An 855-amino-acid polypeptide reads, in one-letter code: Homeobox-leucine zipper protein HOX33 (855 aa).

A disordered region spans residues 1–21 (MAAAAVGGRGERLSSSSPTAA). The homeobox DNA-binding region spans 26-89 (DAGKYVRYTP…NRRCREKQRK (64 aa)). Positions 84-126 (REKQRKEASRLQTVNRKLNAMNKLLMEENDRLQKQVSRLVYEN) form a coiled coil. Residues 168–390 (DANNPAGLLA…LRHIRQIAHE (223 aa)) form the START domain.

The protein belongs to the HD-ZIP homeobox family. Class III subfamily. In terms of tissue distribution, expressed in seedlings, roots, stems, leaf sheaths and blades and panicles.

It is found in the nucleus. Its function is as follows. Probable transcription factor. This is Homeobox-leucine zipper protein HOX33 (HOX33) from Oryza sativa subsp. indica (Rice).